A 283-amino-acid chain; its full sequence is Urease accessory protein UreD (283 aa).

Residues 1-20 form a disordered region; sequence MTQTQPVGTLRLTIDDQGPQ.

Belongs to the UreD family. UreD, UreF and UreG form a complex that acts as a GTP-hydrolysis-dependent molecular chaperone, activating the urease apoprotein by helping to assemble the nickel containing metallocenter of UreC. The UreE protein probably delivers the nickel.

It localises to the cytoplasm. Required for maturation of urease via the functional incorporation of the urease nickel metallocenter. The chain is Urease accessory protein UreD from Corynebacterium glutamicum (strain R).